A 386-amino-acid chain; its full sequence is MNIHEYQAKEILSKYNVPIQPGIAILKYEDIDYAIDSLATDTFVIKAQIHAGGRKIGGGIKISNDKNEAKNLAKNMWGMNLVTPQTGPKGQKVQRIYIESAAKIKLELYLGAVIDRSNHCITFMASSEGGINIEEVAHTNPDKIIKVKINILTGIQPFHSRKIIFQLGLTGDLAKQMAKIMSAVYSMLINTDATQVEINPLIITLDDKLIALDAKINFDDSALFRQPLIQEMRDEDEEDQLELRATKADLSYVRMNGNIGCMVNGAGLAMATMDIIKLYGAEPANFLDVGGSADKERVAEALKIISSDQNVKGILINIFGGIMRCDIIAEGVLAAAKEINLSIPLVVRLAGTNFELGKEILSNSKLQIVAANDLDDAARKIVEAVS.

ATP contacts are provided by Lys46, Glu99, Ala102, and Glu107. Positions 199 and 213 each coordinate Mg(2+). Substrate is bound by residues Asn264 and 321–323 (GIM).

It belongs to the succinate/malate CoA ligase beta subunit family. Heterotetramer of two alpha and two beta subunits. Requires Mg(2+) as cofactor.

It carries out the reaction succinate + ATP + CoA = succinyl-CoA + ADP + phosphate. The enzyme catalyses GTP + succinate + CoA = succinyl-CoA + GDP + phosphate. It functions in the pathway carbohydrate metabolism; tricarboxylic acid cycle; succinate from succinyl-CoA (ligase route): step 1/1. Its function is as follows. Succinyl-CoA synthetase functions in the citric acid cycle (TCA), coupling the hydrolysis of succinyl-CoA to the synthesis of either ATP or GTP and thus represents the only step of substrate-level phosphorylation in the TCA. The beta subunit provides nucleotide specificity of the enzyme and binds the substrate succinate, while the binding sites for coenzyme A and phosphate are found in the alpha subunit. The chain is Succinate--CoA ligase [ADP-forming] subunit beta from Orientia tsutsugamushi (strain Ikeda) (Rickettsia tsutsugamushi).